We begin with the raw amino-acid sequence, 121 residues long: Small ribosomal subunit protein eS24 (121 aa).

Belongs to the eukaryotic ribosomal protein eS24 family.

The protein is Small ribosomal subunit protein eS24 of Pyrobaculum aerophilum (strain ATCC 51768 / DSM 7523 / JCM 9630 / CIP 104966 / NBRC 100827 / IM2).